Consider the following 232-residue polypeptide: Small heat shock protein, chloroplastic (232 aa).

Residues 1 to 25 (MAQSVSLSTIASPILSQKPGSSVKS) are compositionally biased toward polar residues. 2 disordered regions span residues 1–35 (MAQS…SFPL) and 48–81 (RAQA…RKPR). The transit peptide at 1–46 (MAQSVSLSTIASPILSQKPGSSVKSTPPCMASFPLRRQLPRLGLRN) directs the protein to the chloroplast. The span at 55 to 78 (GDNKDNSVEVHRVNKDDQGTAVER) shows a compositional bias: basic and acidic residues. Residues 124–232 (IGGGEIRVPW…ERTVIDVQIQ (109 aa)) form the sHSP domain.

Belongs to the small heat shock protein (HSP20) family.

It localises to the plastid. It is found in the chloroplast. This is Small heat shock protein, chloroplastic (HSP21) from Pisum sativum (Garden pea).